Reading from the N-terminus, the 239-residue chain is Purine nucleoside phosphorylase DeoD-type (239 aa).

Histidine 5 is a binding site for a purine D-ribonucleoside. Phosphate-binding positions include glycine 21, arginine 25, arginine 44, and 88 to 91 (RVGS). Residues 180–182 (EME) and 204–205 (SD) each bind a purine D-ribonucleoside. Aspartate 205 acts as the Proton donor in catalysis.

Belongs to the PNP/UDP phosphorylase family. In terms of assembly, homohexamer; trimer of homodimers.

The enzyme catalyses a purine D-ribonucleoside + phosphate = a purine nucleobase + alpha-D-ribose 1-phosphate. The catalysed reaction is a purine 2'-deoxy-D-ribonucleoside + phosphate = a purine nucleobase + 2-deoxy-alpha-D-ribose 1-phosphate. Functionally, catalyzes the reversible phosphorolytic breakdown of the N-glycosidic bond in the beta-(deoxy)ribonucleoside molecules, with the formation of the corresponding free purine bases and pentose-1-phosphate. In Salmonella agona (strain SL483), this protein is Purine nucleoside phosphorylase DeoD-type.